A 282-amino-acid chain; its full sequence is ATP phosphoribosyltransferase (282 aa).

Belongs to the ATP phosphoribosyltransferase family. Long subfamily. It depends on Mg(2+) as a cofactor.

The protein localises to the cytoplasm. It catalyses the reaction 1-(5-phospho-beta-D-ribosyl)-ATP + diphosphate = 5-phospho-alpha-D-ribose 1-diphosphate + ATP. The protein operates within amino-acid biosynthesis; L-histidine biosynthesis; L-histidine from 5-phospho-alpha-D-ribose 1-diphosphate: step 1/9. With respect to regulation, feedback inhibited by histidine. Functionally, catalyzes the condensation of ATP and 5-phosphoribose 1-diphosphate to form N'-(5'-phosphoribosyl)-ATP (PR-ATP). Has a crucial role in the pathway because the rate of histidine biosynthesis seems to be controlled primarily by regulation of HisG enzymatic activity. This chain is ATP phosphoribosyltransferase, found in Pyrobaculum islandicum (strain DSM 4184 / JCM 9189 / GEO3).